Reading from the N-terminus, the 364-residue chain is MNTTSTHFVPPRRFEVYEPLNQIGMWEESFKNNGDMYTPGSIIIPTNEKPDSLSEDTSHGTEGTPHKFDQEASTSRHPDKIQRRLAQNREAARKSRLRKKAYVQQLETSRLKLIHLEQELDRARQQGFYVGNGVDTNALSFSDNMSSGIVAFEMEYGHWVEEQNRQICELRTVLHGQVSDIELRSLVENAMKHYFQLFRMKSAAAKIDVFYVMSGMWKTSAERFFLWIGGFRPSELLKVLLPHFDPLTDQQLLDVCNLRQSCQQAEDALSQGMEKLQHTLAESVAAGKLGEGSYIPQMTCAMERLEALVSFVNQADHLRHETLQQMHRILTTRQAARGLLALGEYFQRLRALSSSWAARQREPT.

The tract at residues P39–D79 is disordered. A compositionally biased stretch (basic and acidic residues) spans E48–D79. The bZIP domain maps to P78–F141. Coiled-coil stretches lie at residues D79–G127 and N257–Q277. The interval K80–K100 is basic motif. A leucine-zipper region spans residues L106–L120. The DOG1 domain maps to I149–R359. A disulfide bond links C256 and C262.

It belongs to the bZIP family. Binds DNA as a dimer. Interaction with the Dof domain proteins OBP1, OBP2 or OBP3 enhances the binding to the ocs element. Interacts with RAP2-3/EPB, an ethylene-responsive element binding protein. The reduced form interacts with NPR1. As to expression, predominantly expressed in roots.

It localises to the nucleus. Transcriptional activator that binds specifically to the DNA sequence 5'-TGACG-3'. Recognizes ocs elements like the as-1 motif of the cauliflower mosaic virus 35S promoter. Binding to the as-1-like cis elements mediate auxin- and salicylic acid-inducible transcription. May be involved in the induction of the systemic acquired resistance (SAR) via its interaction with NPR1. Could also bind to the Hex-motif (5'-TGACGTGG-3') another cis-acting element found in plant histone promoters. The protein is Transcription factor TGA4 (TGA4) of Arabidopsis thaliana (Mouse-ear cress).